Consider the following 227-residue polypeptide: Adapter protein MecA 1 (227 aa).

The protein belongs to the MecA family. Homodimer.

Its function is as follows. Enables the recognition and targeting of unfolded and aggregated proteins to the ClpC protease or to other proteins involved in proteolysis. Acts negatively in the development of competence by binding ComK and recruiting it to the ClpCP protease. When overexpressed, inhibits sporulation. Also involved in Spx degradation by ClpC. The chain is Adapter protein MecA 1 (mecA1) from Bacillus cereus (strain ATCC 14579 / DSM 31 / CCUG 7414 / JCM 2152 / NBRC 15305 / NCIMB 9373 / NCTC 2599 / NRRL B-3711).